The following is a 298-amino-acid chain: Putative S-adenosyl-L-methionine-dependent methyltransferase MAV_0778 (298 aa).

S-adenosyl-L-methionine contacts are provided by residues D124 and 153–154 (DL).

The protein belongs to the UPF0677 family.

Its function is as follows. Exhibits S-adenosyl-L-methionine-dependent methyltransferase activity. This chain is Putative S-adenosyl-L-methionine-dependent methyltransferase MAV_0778, found in Mycobacterium avium (strain 104).